Here is a 108-residue protein sequence, read N- to C-terminus: DNA-directed RNA polymerase III subunit RPC10 (108 aa).

C5, C8, C25, C28, C69, and C72 together coordinate Zn(2+). A C4-type zinc finger spans residues 5–28 (CPGCGNGLIVEEGQRCHRFACNTC). The TFIIS-type zinc finger occupies 65–107 (TAEPCPKCEHPRAYFMQLQTRYADEPMTTFYKCCNAQCGHRWR). Residues 88 to 89 (DE) carry the Hairpin motif. Positions 98 and 102 each coordinate Zn(2+).

The protein belongs to the archaeal RpoM/eukaryotic RPA12/RPB9/RPC11 RNA polymerase family. As to quaternary structure, component of the RNA polymerase III complex consisting of 17 subunits: a ten-subunit horseshoe-shaped catalytic core composed of POLR3A/RPC1, POLR3B/RPC2, POLR1C/RPAC1, POLR1D/RPAC2, POLR3K/RPC10, POLR2E/RPABC1, POLR2F/RPABC2, POLR2H/RPABC3, POLR2K/RPABC4 and POLR2L/RPABC5; a mobile stalk composed of two subunits POLR3H/RPC8 and CRCP/RPC9, protruding from the core and functioning primarily in transcription initiation; and additional subunits homologous to general transcription factors of the RNA polymerase II machinery, POLR3C/RPC3-POLR3F/RPC6-POLR3G/RPC7 heterotrimer required for transcription initiation and POLR3D/RPC4-POLR3E/RPC5 heterodimer involved in both transcription initiation and termination.

The protein localises to the nucleus. Functionally, core component of RNA polymerase III (Pol III) which synthesizes small non-coding RNAs using the four ribonucleoside triphosphates as substrates. Can mediate Pol I proofreading of the nascent RNA transcript. Anchors into the Pol III active site to constantly monitor transcription fidelity, cleaves mis-incorporated 5'-ribonucleotides and restarts the transcription process. Once Pol III reaches the poly(dT) termination signal, can induce Pol III clamp opening and transcription termination. Pol III plays an important role in sensing and limiting infection by intracellular bacteria and DNA viruses. Acts as a nuclear and cytosolic DNA sensor involved in innate immune response. Can sense non-self dsDNA that serves as template for transcription into dsRNA. The non-self RNA polymerase III transcripts, such as Epstein-Barr virus-encoded RNAs (EBERs) induce type I interferon and NF-kappa-B through the RIG-I pathway. This is DNA-directed RNA polymerase III subunit RPC10 (POLR3K) from Bos taurus (Bovine).